The primary structure comprises 347 residues: tRNA N6-adenosine threonylcarbamoyltransferase (347 aa).

Residues His109 and His113 each coordinate Fe cation. Residues 136–140, Asp169, Gly182, Asp186, and Asn284 contribute to the substrate site; that span reads TVSGG. Asp312 contacts Fe cation.

The protein belongs to the KAE1 / TsaD family. The cofactor is Fe(2+).

Its subcellular location is the cytoplasm. The enzyme catalyses L-threonylcarbamoyladenylate + adenosine(37) in tRNA = N(6)-L-threonylcarbamoyladenosine(37) in tRNA + AMP + H(+). Its function is as follows. Required for the formation of a threonylcarbamoyl group on adenosine at position 37 (t(6)A37) in tRNAs that read codons beginning with adenine. Is involved in the transfer of the threonylcarbamoyl moiety of threonylcarbamoyl-AMP (TC-AMP) to the N6 group of A37, together with TsaE and TsaB. TsaD likely plays a direct catalytic role in this reaction. This is tRNA N6-adenosine threonylcarbamoyltransferase from Chlorobium phaeobacteroides (strain BS1).